A 214-amino-acid polypeptide reads, in one-letter code: Probable transaldolase (214 aa).

Lysine 83 (schiff-base intermediate with substrate) is an active-site residue.

This sequence belongs to the transaldolase family. Type 3B subfamily.

It localises to the cytoplasm. It catalyses the reaction D-sedoheptulose 7-phosphate + D-glyceraldehyde 3-phosphate = D-erythrose 4-phosphate + beta-D-fructose 6-phosphate. The protein operates within carbohydrate degradation; pentose phosphate pathway; D-glyceraldehyde 3-phosphate and beta-D-fructose 6-phosphate from D-ribose 5-phosphate and D-xylulose 5-phosphate (non-oxidative stage): step 2/3. Its function is as follows. Transaldolase is important for the balance of metabolites in the pentose-phosphate pathway. The chain is Probable transaldolase from Thermodesulfovibrio yellowstonii (strain ATCC 51303 / DSM 11347 / YP87).